The following is a 92-amino-acid chain: Small ribosomal subunit protein uS17 (92 aa).

This sequence belongs to the universal ribosomal protein uS17 family. As to quaternary structure, part of the 30S ribosomal subunit.

In terms of biological role, one of the primary rRNA binding proteins, it binds specifically to the 5'-end of 16S ribosomal RNA. The sequence is that of Small ribosomal subunit protein uS17 from Corynebacterium diphtheriae (strain ATCC 700971 / NCTC 13129 / Biotype gravis).